The sequence spans 648 residues: Probable potassium transport system protein Kup 1 (648 aa).

Residues 1 to 31 (MSDAVTDADGSSAQSHAQSAGHHAVQGHGGH) are disordered. Residues 10–26 (GSSAQSHAQSAGHHAVQ) show a composition bias toward low complexity. The next 12 helical transmembrane spans lie at 39 to 59 (LAVG…LYAL), 73 to 93 (LLHI…IVTF), 130 to 150 (IILL…ITPA), 165 to 185 (PDMH…LFFI), 193 to 213 (VAAF…VLGA), 243 to 263 (FLAM…YADM), 275 to 295 (WLVF…SLLI), 317 to 337 (LLFI…SGAF), 364 to 384 (IFIP…VLVF), 394 to 414 (YGIA…VVLF), 421 to 441 (APAA…YLGA), and 446 to 466 (IPDG…LLTT).

It belongs to the HAK/KUP transporter (TC 2.A.72) family.

It localises to the cell inner membrane. The enzyme catalyses K(+)(in) + H(+)(in) = K(+)(out) + H(+)(out). Its function is as follows. Transport of potassium into the cell. Likely operates as a K(+):H(+) symporter. The polypeptide is Probable potassium transport system protein Kup 1 (Novosphingobium aromaticivorans (strain ATCC 700278 / DSM 12444 / CCUG 56034 / CIP 105152 / NBRC 16084 / F199)).